A 153-amino-acid polypeptide reads, in one-letter code: Riboflavin synthase (153 aa).

Belongs to the DMRL synthase family. As to quaternary structure, homooligomer. Mg(2+) serves as cofactor.

The enzyme catalyses 2 6,7-dimethyl-8-(1-D-ribityl)lumazine + H(+) = 5-amino-6-(D-ribitylamino)uracil + riboflavin. It functions in the pathway cofactor biosynthesis; riboflavin biosynthesis; riboflavin from 2-hydroxy-3-oxobutyl phosphate and 5-amino-6-(D-ribitylamino)uracil: step 2/2. With respect to regulation, inhibited by EDTA. This is Riboflavin synthase (ribC) from Methanothermobacter thermautotrophicus (strain ATCC 29096 / DSM 1053 / JCM 10044 / NBRC 100330 / Delta H) (Methanobacterium thermoautotrophicum).